The following is a 318-amino-acid chain: Lipoyl synthase 1 (318 aa).

A disordered region spans residues 6 to 32 (DTISNPLRPRHPEKVNRPDSASPPKPD). Positions 60, 65, 71, 86, 90, 93, and 299 each coordinate [4Fe-4S] cluster. A Radical SAM core domain is found at 72–288 (WDKKHATFMI…EKVAYTKGFL (217 aa)).

The protein belongs to the radical SAM superfamily. Lipoyl synthase family. It depends on [4Fe-4S] cluster as a cofactor.

The protein localises to the cytoplasm. It carries out the reaction [[Fe-S] cluster scaffold protein carrying a second [4Fe-4S](2+) cluster] + N(6)-octanoyl-L-lysyl-[protein] + 2 oxidized [2Fe-2S]-[ferredoxin] + 2 S-adenosyl-L-methionine + 4 H(+) = [[Fe-S] cluster scaffold protein] + N(6)-[(R)-dihydrolipoyl]-L-lysyl-[protein] + 4 Fe(3+) + 2 hydrogen sulfide + 2 5'-deoxyadenosine + 2 L-methionine + 2 reduced [2Fe-2S]-[ferredoxin]. The protein operates within protein modification; protein lipoylation via endogenous pathway; protein N(6)-(lipoyl)lysine from octanoyl-[acyl-carrier-protein]: step 2/2. Functionally, catalyzes the radical-mediated insertion of two sulfur atoms into the C-6 and C-8 positions of the octanoyl moiety bound to the lipoyl domains of lipoate-dependent enzymes, thereby converting the octanoylated domains into lipoylated derivatives. The polypeptide is Lipoyl synthase 1 (Bradyrhizobium diazoefficiens (strain JCM 10833 / BCRC 13528 / IAM 13628 / NBRC 14792 / USDA 110)).